The primary structure comprises 392 residues: Chorismate synthase (392 aa).

NADP(+) is bound by residues Arg40 and Arg46. FMN-binding positions include 135 to 137, 256 to 257, Gly300, 315 to 319, and Arg341; these read RAS, QA, and KPISS.

This sequence belongs to the chorismate synthase family. Homotetramer. FMNH2 serves as cofactor.

It catalyses the reaction 5-O-(1-carboxyvinyl)-3-phosphoshikimate = chorismate + phosphate. It participates in metabolic intermediate biosynthesis; chorismate biosynthesis; chorismate from D-erythrose 4-phosphate and phosphoenolpyruvate: step 7/7. Functionally, catalyzes the anti-1,4-elimination of the C-3 phosphate and the C-6 proR hydrogen from 5-enolpyruvylshikimate-3-phosphate (EPSP) to yield chorismate, which is the branch point compound that serves as the starting substrate for the three terminal pathways of aromatic amino acid biosynthesis. This reaction introduces a second double bond into the aromatic ring system. The protein is Chorismate synthase of Salinispora tropica (strain ATCC BAA-916 / DSM 44818 / JCM 13857 / NBRC 105044 / CNB-440).